The chain runs to 594 residues: RING finger protein 207 (594 aa).

The RING-type zinc-finger motif lies at 25–64; the sequence is CPLCHAQYERPCLLDCFHDFCAGCLRGRTADGRVACPLCQ. The B box-type; atypical zinc finger occupies 93–145; sequence VEAVHCANCDLDCSKQDAETACFCNTCGQPLCARCRDETHRARMFARHDIVAL. Cys-98, Cys-101, Cys-127, and His-132 together coordinate Zn(2+). The tract at residues 369–400 is disordered; it reads NTLAGGSGPKVLMGPSCPSPVRKVSRSPVQKP. The stretch at 424–458 forms a coiled coil; sequence CRHYEDSYRGLQAEVQNLKDQVQELHRDLTKHHSL. The disordered stretch occupies residues 552–594; that stretch reads FQASADDESENPQTAYDASRNGETPASLLLPGSVASAEPPFVN. The span at 562–575 shows a compositional bias: polar residues; that stretch reads NPQTAYDASRNGET.

Interacts with the core-glycosylated, but not the fully glycosylated form of KCNH2/HERG. Interacts with DNAJA1 and HSPA8. Interacts (via the C-terminus) with HSPA1A; this interaction additively increases KCNH2 expression.

The protein localises to the cytoplasm. Plays a role in cardiac repolarization possibly by stabilizing membrane expression of the potassium channel KCNH2/HERG, or by assisting its synthesis, folding or export from the endoplasmic reticulum, in a heat shock protein-dependent manner. This chain is RING finger protein 207 (RNF207), found in Oryctolagus cuniculus (Rabbit).